Reading from the N-terminus, the 373-residue chain is Spermidine/putrescine import ATP-binding protein PotA (373 aa).

The region spanning Ile5–Ile235 is the ABC transporter domain. Residue Gly37–Thr44 coordinates ATP.

Belongs to the ABC transporter superfamily. Spermidine/putrescine importer (TC 3.A.1.11.1) family. In terms of assembly, the complex is composed of two ATP-binding proteins (PotA), two transmembrane proteins (PotB and PotC) and a solute-binding protein (PotD).

It localises to the cell inner membrane. It catalyses the reaction ATP + H2O + polyamine-[polyamine-binding protein]Side 1 = ADP + phosphate + polyamineSide 2 + [polyamine-binding protein]Side 1.. Functionally, part of the ABC transporter complex PotABCD involved in spermidine/putrescine import. Responsible for energy coupling to the transport system. The chain is Spermidine/putrescine import ATP-binding protein PotA from Protochlamydia amoebophila (strain UWE25).